Here is a 203-residue protein sequence, read N- to C-terminus: Small ribosomal subunit protein uS4 (203 aa).

In terms of domain architecture, S4 RNA-binding spans 93-173 (RRLDNVVFRS…FPSWIQVDKA (81 aa)).

Belongs to the universal ribosomal protein uS4 family. In terms of assembly, part of the 30S ribosomal subunit. Contacts protein S5. The interaction surface between S4 and S5 is involved in control of translational fidelity.

Functionally, one of the primary rRNA binding proteins, it binds directly to 16S rRNA where it nucleates assembly of the body of the 30S subunit. Its function is as follows. With S5 and S12 plays an important role in translational accuracy. The protein is Small ribosomal subunit protein uS4 of Chlorobium limicola (strain DSM 245 / NBRC 103803 / 6330).